The sequence spans 847 residues: Cancer-associated gene 1 protein homolog (847 aa).

The interval 118-161 (EEKPELQSQVYNDPADASQKPDPLKEESLMESSTSENKDELVHE) is disordered. Positions 377 to 567 (NVILEKNDIN…AAKREAQACT (191 aa)) form a coiled coil.

This Rattus norvegicus (Rat) protein is Cancer-associated gene 1 protein homolog (Cage1).